A 193-amino-acid chain; its full sequence is NAD(P)H-quinone oxidoreductase subunit I (193 aa).

4Fe-4S ferredoxin-type domains follow at residues 55 to 84 (GRIH…VDWE) and 95 to 124 (KHYS…VTEE). [4Fe-4S] cluster is bound by residues cysteine 64, cysteine 67, cysteine 70, cysteine 74, cysteine 104, cysteine 107, cysteine 110, and cysteine 114.

Belongs to the complex I 23 kDa subunit family. NDH-1 is composed of at least 11 different subunits. [4Fe-4S] cluster is required as a cofactor.

The protein resides in the cellular thylakoid membrane. It carries out the reaction a plastoquinone + NADH + (n+1) H(+)(in) = a plastoquinol + NAD(+) + n H(+)(out). The enzyme catalyses a plastoquinone + NADPH + (n+1) H(+)(in) = a plastoquinol + NADP(+) + n H(+)(out). Its function is as follows. NDH-1 shuttles electrons from an unknown electron donor, via FMN and iron-sulfur (Fe-S) centers, to quinones in the respiratory and/or the photosynthetic chain. The immediate electron acceptor for the enzyme in this species is believed to be plastoquinone. Couples the redox reaction to proton translocation, and thus conserves the redox energy in a proton gradient. In Cyanothece sp. (strain PCC 7425 / ATCC 29141), this protein is NAD(P)H-quinone oxidoreductase subunit I.